The primary structure comprises 528 residues: Glutamyl-tRNA(Gln) amidotransferase subunit B, mitochondrial (528 aa).

Residues 1–21 (MSWRLSFRTNLLIYNVRRRNY) constitute a mitochondrion transit peptide.

Belongs to the GatB/GatE family. GatB subfamily. As to quaternary structure, subunit of the heterotrimeric GatCAB amidotransferase (AdT) complex, composed of A, B and C subunits.

It localises to the mitochondrion. The catalysed reaction is L-glutamyl-tRNA(Gln) + L-glutamine + ATP + H2O = L-glutaminyl-tRNA(Gln) + L-glutamate + ADP + phosphate + H(+). Functionally, allows the formation of correctly charged Gln-tRNA(Gln) through the transamidation of misacylated Glu-tRNA(Gln) in the mitochondria. The reaction takes place in the presence of glutamine and ATP through an activated gamma-phospho-Glu-tRNA(Gln). This is Glutamyl-tRNA(Gln) amidotransferase subunit B, mitochondrial from Aedes aegypti (Yellowfever mosquito).